The chain runs to 402 residues: Deoxyguanosinetriphosphate triphosphohydrolase-like protein 2 (402 aa).

Residues 72–215 (RLTHSLEVAQ…MDLADEIAYA (144 aa)) enclose the HD domain.

This sequence belongs to the dGTPase family. Type 2 subfamily.

The polypeptide is Deoxyguanosinetriphosphate triphosphohydrolase-like protein 2 (Vibrio cholerae serotype O1 (strain ATCC 39315 / El Tor Inaba N16961)).